Reading from the N-terminus, the 471-residue chain is Glutamate--tRNA ligase (471 aa).

The short motif at 9–19 is the 'HIGH' region element; that stretch reads PSPTGYLHVGG. Positions 98, 100, 125, and 127 each coordinate Zn(2+). The short motif at 237–241 is the 'KMSKS' region element; sequence KLSKR. Residue Lys-240 participates in ATP binding.

This sequence belongs to the class-I aminoacyl-tRNA synthetase family. Glutamate--tRNA ligase type 1 subfamily. Monomer. The cofactor is Zn(2+).

It localises to the cytoplasm. The catalysed reaction is tRNA(Glu) + L-glutamate + ATP = L-glutamyl-tRNA(Glu) + AMP + diphosphate. Functionally, catalyzes the attachment of glutamate to tRNA(Glu) in a two-step reaction: glutamate is first activated by ATP to form Glu-AMP and then transferred to the acceptor end of tRNA(Glu). The chain is Glutamate--tRNA ligase from Shigella dysenteriae serotype 1 (strain Sd197).